The following is a 35-amino-acid chain: Surfactant protein C (35 aa).

Residues C5 and C6 are each lipidated (S-palmitoyl cysteine).

The protein resides in the secreted. It is found in the extracellular space. Its subcellular location is the surface film. Functionally, pulmonary surfactant associated proteins promote alveolar stability by lowering the surface tension at the air-liquid interface in the peripheral air spaces. This chain is Surfactant protein C (SFTPC), found in Sus scrofa (Pig).